The primary structure comprises 137 residues: Large ribosomal subunit protein bL17 (137 aa).

It belongs to the bacterial ribosomal protein bL17 family. Part of the 50S ribosomal subunit. Contacts protein L32.

The sequence is that of Large ribosomal subunit protein bL17 from Caulobacter vibrioides (strain ATCC 19089 / CIP 103742 / CB 15) (Caulobacter crescentus).